A 173-amino-acid chain; its full sequence is Ribosome maturation factor RimP (173 aa).

It belongs to the RimP family.

The protein resides in the cytoplasm. In terms of biological role, required for maturation of 30S ribosomal subunits. The chain is Ribosome maturation factor RimP from Chlorobium phaeobacteroides (strain DSM 266 / SMG 266 / 2430).